Consider the following 335-residue polypeptide: Phosphate acyltransferase (335 aa).

It belongs to the PlsX family. As to quaternary structure, homodimer. Probably interacts with PlsY.

It localises to the cytoplasm. It catalyses the reaction a fatty acyl-[ACP] + phosphate = an acyl phosphate + holo-[ACP]. It functions in the pathway lipid metabolism; phospholipid metabolism. In terms of biological role, catalyzes the reversible formation of acyl-phosphate (acyl-PO(4)) from acyl-[acyl-carrier-protein] (acyl-ACP). This enzyme utilizes acyl-ACP as fatty acyl donor, but not acyl-CoA. The sequence is that of Phosphate acyltransferase from Streptococcus pyogenes serotype M28 (strain MGAS6180).